A 694-amino-acid chain; its full sequence is 4-alpha-glucanotransferase (694 aa).

It belongs to the disproportionating enzyme family.

The protein localises to the cytoplasm. The enzyme catalyses Transfers a segment of a (1-&gt;4)-alpha-D-glucan to a new position in an acceptor, which may be glucose or a (1-&gt;4)-alpha-D-glucan.. This Escherichia coli (strain K12) protein is 4-alpha-glucanotransferase (malQ).